Consider the following 172-residue polypeptide: Ly6/PLAUR domain-containing protein 6B (172 aa).

Residues 1-25 (MLLLCHILAVTILQILIISENWVFA) form the signal peptide. The 92-residue stretch at 46–137 (FKCFTCENAG…VELPTNHTNA (92 aa)) folds into the UPAR/Ly6 domain. A sufficient for inhibiting alpha-7 nAChR currents region spans residues 46 to 140 (FKCFTCENAG…PTNHTNAVFA (95 aa)). Cystine bridges form between cysteine 48–cysteine 76, cysteine 51–cysteine 60, cysteine 69–cysteine 95, cysteine 101–cysteine 120, cysteine 106–cysteine 117, and cysteine 121–cysteine 126. Serine 148 carries GPI-anchor amidated serine lipidation. Positions 149-172 (GSSVSSVPSPYLLVLAWLFMLPLL) are cleaved as a propeptide — removed in mature form.

The protein localises to the cell membrane. Functionally, likely acts as a modulator of nicotinic acetylcholine receptors (nAChRs) activity. In vitro acts on nAChRs in a subtype- and stoichiometry-dependent manner. Modulates specifically alpha-3(3):beta-4(2) nAChRs by enhancing the sensitivity to ACh, decreasing ACh-induced maximal current response and increasing the rate of desensitization to ACh; has no effect on alpha-7 homomeric nAChRs; modulates alpha-3(2):alpha-5:beta-4(2) nAChRs in the context of CHRNA5/alpha-5 variant Asn-398 but not its wild-type sequence. However, according to another report in vitro it can weakly inhibits alpha-7 nAChRs. The protein is Ly6/PLAUR domain-containing protein 6B (Lypd6b) of Mus musculus (Mouse).